Consider the following 191-residue polypeptide: MSIKSDRWIRHMAKQHGMIAPFEPGQIKQNTTGQRIVSYGTSSYGYDVRCSREFKIFTNINSTIVDPKQFDNGSFIDVESDVCIIPPNSFALARTIEYFRIPRNVLVICLGKSTYARCGIIVNVTPLEPEWEGHVTLEFSNTTPLPARIYANEGVAQMLFLQADPDDVCETSYRDRNGKYQGQTGVTLPRT.

DCTP contacts are provided by residues 112-117 (KSTYAR), 136-138 (TLE), Gln-157, Tyr-173, and Gln-183. The Proton donor/acceptor role is filled by Glu-138.

This sequence belongs to the dCTP deaminase family. Homotrimer.

It catalyses the reaction dCTP + H2O + H(+) = dUTP + NH4(+). It participates in pyrimidine metabolism; dUMP biosynthesis; dUMP from dCTP (dUTP route): step 1/2. Its function is as follows. Catalyzes the deamination of dCTP to dUTP. The chain is dCTP deaminase from Xylella fastidiosa (strain M12).